Here is a 360-residue protein sequence, read N- to C-terminus: MARRPRNSRAWRFVLSGVRRDQDARSPTLPAEEEAWGYDSDGQHSNSDSDTDLLHLPPSIPSAVPVTGESYCDCDSQNDPYCSSLHTFHQIKSCQCGEEDNYFDWVWDDCSKSTATVLSCDNRKVSFHMEYSCGTAAIRGNRMLTEGQHFWEIKMTSPVYGTDMMVGIGTSDVNLDKYRHTFCSLLGKDAESWGLSYTGLLQHKGDKSNFSSRFGQGSIIGVHLDTWHGVLTFYKNRKCIGVAATQLRNKKLFPMVCSTAAKSSMKVIRSCCCRTSLQYLCCARLRQLLPDSVDSLEVLPLPPGLKQVLGNKLGWVLQMGSNRSNQHKGDTSATTSCGSDSDSSCTPGQDDCQRKRCRRI.

Residues 20-55 (RDQDARSPTLPAEEEAWGYDSDGQHSNSDSDTDLLH) are disordered. In terms of domain architecture, B30.2/SPRY spans 85–274 (LHTFHQIKSC…MKVIRSCCCR (190 aa)). One can recognise an SOCS box domain in the interval 264 to 315 (SMKVIRSCCCRTSLQYLCCARLRQLLPDSVDSLEVLPLPPGLKQVLGNKLGW). The tract at residues 323 to 350 (RSNQHKGDTSATTSCGSDSDSSCTPGQD) is disordered. The segment covering 331–346 (TSATTSCGSDSDSSCT) has biased composition (low complexity).

Belongs to the SPSB family. Substrate-recognition component of the ECS(SPSB3) complex, composed of spsb3, cul5, elob, elob and rnf7/rbx2.

The protein resides in the nucleus. It functions in the pathway protein modification; protein ubiquitination. Its function is as follows. Substrate-recognition component of a cullin-5-RING E3 ubiquitin-protein ligase complex (ECS complex, also named CRL5 complex), which mediates the ubiquitination and subsequent proteasomal degradation of target proteins. The sequence is that of SPRY domain-containing SOCS box protein 3 (spsb3) from Xenopus tropicalis (Western clawed frog).